The primary structure comprises 953 residues: Zinc finger protein 618 (953 aa).

Met-1 carries the post-translational modification N-acetylmethionine. A disordered region spans residues 1–56 (MSQPDGAAAPQVDGASAPGRKSAVNRERLKRSQKSSKVEGPEPVPAEASLSAEQGT). Glycyl lysine isopeptide (Lys-Gly) (interchain with G-Cter in SUMO2) cross-links involve residues Lys-63 and Lys-81. 2 C2H2-type zinc fingers span residues 146–168 (YECG…VRAH) and 187–209 (YTCD…RDLH). Lys-238 is covalently cross-linked (Glycyl lysine isopeptide (Lys-Gly) (interchain with G-Cter in SUMO2)). The C2H2-type 3 zinc finger occupies 255 to 277 (YTCEFCGKQYKYYTPYQEHVALH). Disordered regions lie at residues 283-305 (APGW…EVTP) and 337-390 (TPPA…SSEP). The segment covering 339–354 (PATQTQTFRAPNSGSP) has biased composition (polar residues). A compositionally biased stretch (basic and acidic residues) spans 365–379 (FSRRVESKAQNHFEE). The segment at 391–413 (YTCGACGIQFQFYSNLLEHMQSH) adopts a C2H2-type 4 zinc-finger fold. The span at 419-428 (NNITSNQSRS) shows a compositional bias: polar residues. Residues 419–461 (NNITSNQSRSPPAAVEEKWKPQAQRNSANNTTTSGLTPNSVIP) form a disordered region. Residue Lys-436 forms a Glycyl lysine isopeptide (Lys-Gly) (interchain with G-Cter in SUMO2) linkage. Over residues 441 to 458 (AQRNSANNTTTSGLTPNS) the composition is skewed to polar residues.

The protein belongs to the krueppel C2H2-type zinc-finger protein family. As to quaternary structure, interacts with UHRF2.

It localises to the nucleus. Its subcellular location is the chromosome. Functionally, regulates UHRF2 function as a specific 5-hydroxymethylcytosine (5hmC) reader by regulating its chromatin localization. This Mus musculus (Mouse) protein is Zinc finger protein 618 (Znf618).